The chain runs to 416 residues: MSAEIICVGTELLLGDILNGNAQFLAQQLAQLGIPHYYQTVVGDNPERLKQVIEIAISRAQILIFTGGLGPTPDDLTCETIADFFKTPLVENPEIIEDITQKFAQRGRVMSPSNRKQALIPQGAEILPNPTGTAPGIIWQPRPKITIFTFPGVPSEMHPMWEETAVPFLKSQGWGKEIIYSRSLKFWGIGESALAEKVSSYLKLPNPTVAPYAGKGEVRLRVSAKATSEAAAEDLIAPIEKQLKEIAGLDFYGVNNDTLASVVGELLRASKETLSVAESCTGGGLGQMLTEISGSSDYFWGGVISYDNSVKIKLLGVNQEDLDKFGAVSATVAEQMAIGVKTRLATTWGLSITGIAGPTGGTDTKPVGLVYVGLAGPKDEVTSFEYQFGTVRGRALIRHVSANAALDNLRRKLLTR.

The protein belongs to the CinA family.

This Nostoc punctiforme (strain ATCC 29133 / PCC 73102) protein is CinA-like protein.